Here is a 213-residue protein sequence, read N- to C-terminus: Large ribosomal subunit protein uL1 (213 aa).

The protein belongs to the universal ribosomal protein uL1 family. In terms of assembly, part of the 50S ribosomal subunit.

Functionally, binds directly to 23S rRNA. Probably involved in E site tRNA release. Its function is as follows. Protein L1 is also a translational repressor protein, it controls the translation of its operon by binding to its mRNA. This Methanocella arvoryzae (strain DSM 22066 / NBRC 105507 / MRE50) protein is Large ribosomal subunit protein uL1.